Reading from the N-terminus, the 887-residue chain is Semaphorin-6B (887 aa).

The signal sequence occupies residues 1-26; the sequence is MWTPRAPPPRPALLFLLLLLLRVTHG. Topologically, residues 27 to 605 are extracellular; that stretch reads LFPDEPPPLS…VSVNLLVTSS (579 aa). One can recognise a Sema domain in the interval 32–525; that stretch reads PPPLSVAPRD…FPRCVVRVPV (494 aa). N75 is a glycosylation site (N-linked (GlcNAc...) asparagine). Cystine bridges form between C117–C127 and C145–C154. Residues N156, N168, and N292 are each glycosylated (N-linked (GlcNAc...) asparagine). 2 cysteine pairs are disulfide-bonded: C268-C379 and C293-C338. 3 N-linked (GlcNAc...) asparagine glycosylation sites follow: N387, N442, and N463. 4 disulfide bridges follow: C487/C519, C528/C546, C534/C580, and C538/C554. Residues 606 to 626 traverse the membrane as a helical segment; that stretch reads VAAFVVGAVVSGFSVGWFVGL. At 627-887 the chain is on the cytoplasmic side; sequence RERRELARRK…TGERTAPPVP (261 aa). Disordered stretches follow at residues 656 to 675, 697 to 717, and 759 to 887; these read LGER…GGPG, HGGP…TPLP, and APEQ…PPVP. Over residues 662 to 674 the composition is skewed to gly residues; the sequence is TGTGGRGGAGGGP. Residue R667 is modified to Omega-N-methylarginine. Low complexity predominate over residues 707–717; it reads LLPTPEQTPLP.

It belongs to the semaphorin family.

The protein localises to the cell membrane. Functionally, functions as a cell surface repellent for mossy fibers of developing neurons in the hippocampus where it plays a role in axon guidance. May function through the PLXNA4 receptor expressed by mossy cell axons. In Rattus norvegicus (Rat), this protein is Semaphorin-6B (Sema6b).